A 106-amino-acid polypeptide reads, in one-letter code: MSLWISGIPIHYYLILAMIIFTIGVAGVMVRRSAVLIFMSVELILNSVNLVFVTFSKALYQVDGEVVVFFVMAIAAAEAAIGLAIVIAIHRIKKTSYVDEMNLMKW.

Helical transmembrane passes span 10–30, 35–55, and 67–87; these read IHYY…GVMV, VLIF…FVTF, and VVFF…AIVI.

It belongs to the complex I subunit 4L family. NDH-1 is composed of 14 different subunits. Subunits NuoA, H, J, K, L, M, N constitute the membrane sector of the complex.

The protein localises to the cell inner membrane. The enzyme catalyses a quinone + NADH + 5 H(+)(in) = a quinol + NAD(+) + 4 H(+)(out). In terms of biological role, NDH-1 shuttles electrons from NADH, via FMN and iron-sulfur (Fe-S) centers, to quinones in the respiratory chain. The immediate electron acceptor for the enzyme in this species is believed to be ubiquinone. Couples the redox reaction to proton translocation (for every two electrons transferred, four hydrogen ions are translocated across the cytoplasmic membrane), and thus conserves the redox energy in a proton gradient. This chain is NADH-quinone oxidoreductase subunit K, found in Leptospira borgpetersenii serovar Hardjo-bovis (strain JB197).